A 297-amino-acid polypeptide reads, in one-letter code: Homoserine kinase (297 aa).

82–92 (PLTRGLGSSAS) contributes to the ATP binding site.

This sequence belongs to the GHMP kinase family. Homoserine kinase subfamily.

It is found in the cytoplasm. The catalysed reaction is L-homoserine + ATP = O-phospho-L-homoserine + ADP + H(+). It functions in the pathway amino-acid biosynthesis; L-threonine biosynthesis; L-threonine from L-aspartate: step 4/5. Functionally, catalyzes the ATP-dependent phosphorylation of L-homoserine to L-homoserine phosphate. In Bacillus cereus (strain AH187), this protein is Homoserine kinase.